The chain runs to 859 residues: MRRGPQVALVLGLLCIYLAQANFAPHFFDNGVGSTNGNMALFSLPEDTPVGSHVYTLNGTDPEGDPISYHISFDPSTRSVFSVDPNFGNITLVEELDREREDEIEAIISISDGLNLVAEKVVIVVTDANDEAPRFLQEPYNILVPENTPAGSSIFKVQAEDKDTGSGGSVTYFLQSLHSSKFTVDRHSGVLRLQAGATLDYEKSRAHFITVVAKDGGGRLRGADVVFSATTTVTINVEDVQDTAPIFVGTPYYGYVYEDTLPGSEVLTVVAIDGDRGKPNHILYRLLNESDGLFEINETSGAISVLQSPAQLRREVYELHVQVTEVNSSGSPAAQSTVPVIIRIVDLNNHPPTFYGESGPQNKFELSMFEHPPQGEILRGLKITVNDSDQGANAKFNLRLVGPGGIFRVVPQTVLNEAQVTIIVENSAAIDFEKSKSLTFKLLAIEVNTPEKFSSTADIVIQLLDTNDNVPKFTSHYYIARIPENVPGGSNVVAVTAVDPDTGPWGKVQYSIYGTGSDLFLIHPSTGLIYTQPWASLDAEGTSRYNFYVKAEDMDGRYSLAEVFVTLLDVNDHYPQFVQSVQEKTMVLGTPLKIEATDQDAEEPNNLVDYSITRAEPVNVFDIDAHTGEIRLKNSIRSLEALHNITPSGEYSWSLQVQAKDRGSPSFSTTALLKIDITDTERLSRSSMAAFLIQTKDNPMKAVGVLAGVMAIVVAITVLISTATFWRNKKSNKVLPVRRVLRRRPSPAPHTVRIEWLKFRRAKAASKFILKEDPPNENCNNSRVGVTVPPRAPALPPPPKMASSTVAQQTVPTVSGSLTPQPSQQLPTPKPLGGPAQSSLVSELKQKFEKKSLGNKAYV.

Residues 1–21 (MRRGPQVALVLGLLCIYLAQA) form the signal peptide. The Extracellular segment spans residues 22 to 701 (NFAPHFFDNG…LIQTKDNPMK (680 aa)). Cadherin domains follow at residues 36-135 (NGNM…APRF), 136-247 (LQEP…APIF), 248-354 (VGTP…PPTF), 360-473 (PQNK…VPKF), 474-577 (TSHY…YPQF), and 569-691 (DVND…MAAF). Asn-58 and Asn-89 each carry an N-linked (GlcNAc...) asparagine glycan. 2 N-linked (GlcNAc...) asparagine glycosylation sites follow: Asn-288 and Asn-297. Residues 702–722 (AVGVLAGVMAIVVAITVLIST) form a helical membrane-spanning segment. Residues 723–859 (ATFWRNKKSN…KKSLGNKAYV (137 aa)) lie on the Cytoplasmic side of the membrane. The segment at 789-859 (PPRAPALPPP…KKSLGNKAYV (71 aa)) is disordered. The segment covering 790-800 (PRAPALPPPPK) has biased composition (pro residues). Over residues 802–816 (ASSTVAQQTVPTVSG) the composition is skewed to polar residues. The span at 817 to 827 (SLTPQPSQQLP) shows a compositional bias: low complexity.

Interacts with PROM1. Post-translationally, undergoes proteolytic cleavage; produces a soluble 95 kDa N-terminal fragment and a 25 kDa cell-associated C-terminal fragment. In terms of tissue distribution, expressed in the retina. Strongly expressed by the mitral and tufted cells in the main and accessory olfactory bulbs. Also expressed in the septum and olfactory cortex. Weakly expressed in the triangular septal nucleus and piriform cortex.

It localises to the cell membrane. In terms of biological role, potential calcium-dependent cell-adhesion protein. May be required for the structural integrity of the outer segment (OS) of photoreceptor cells. This is Cadherin-related family member 1 (Cdhr1) from Rattus norvegicus (Rat).